The primary structure comprises 295 residues: Glutamyl-Q tRNA(Asp) synthetase (295 aa).

L-glutamate-binding positions include 5 to 9 (RFAPS) and Glu-41. The 'HIGH' region signature appears at 8 to 18 (PSPTGLLHIGS). 4 residues coordinate Zn(2+): Cys-97, Cys-99, Tyr-117, and Cys-121. L-glutamate contacts are provided by Tyr-178 and Arg-196. A 'KMSKS' region motif is present at residues 234-238 (KWSKQ). Lys-237 lines the ATP pocket.

This sequence belongs to the class-I aminoacyl-tRNA synthetase family. GluQ subfamily. Zn(2+) serves as cofactor.

Functionally, catalyzes the tRNA-independent activation of glutamate in presence of ATP and the subsequent transfer of glutamate onto a tRNA(Asp). Glutamate is transferred on the 2-amino-5-(4,5-dihydroxy-2-cyclopenten-1-yl) moiety of the queuosine in the wobble position of the QUC anticodon. The chain is Glutamyl-Q tRNA(Asp) synthetase from Neisseria meningitidis serogroup C (strain 053442).